The sequence spans 161 residues: ADKERAQRATSNVFARLPQKLMQEMKEAFTMIDQNRDGFIDINDLKEMFSSLGRTPDDKELTAMLKEAPGPLNFTMFLSIFSDKLSGTDTEETLRNAFAMFDELDTKKLNIEYIKDLLENMGDNFTKDEMRMTFKEAPVTGGKFDYVKFTAMIKGSGEEEA.

Residue A1 is modified to Blocked amino end (Ala). EF-hand domains follow at residues 20–55 (KLMQ…LGRT) and 89–124 (DTEE…MGDN). Residues D33, N35, D37, and D44 each contribute to the Ca(2+) site.

In terms of biological role, in molluscan muscle, calcium regulation is associated with myosin rather than with actin. Muscle myosin contains two types of light chains: the catalytic light chain, essential for ATPase activity, and the regulatory light chain, a calcium-binding protein responsible for Ca(2+) dependent binding and Ca(2+) dependent Mg-ATPase activity. The chain is Myosin regulatory light chain A, smooth adductor muscle from Mizuhopecten yessoensis (Japanese scallop).